Here is a 353-residue protein sequence, read N- to C-terminus: tRNA N6-adenosine threonylcarbamoyltransferase (353 aa).

Fe cation-binding residues include His-109 and His-113. Residues 136–140 (TVSGG), Asp-169, Gly-182, Asp-186, and Asn-284 each bind substrate. Fe cation is bound at residue Asp-312.

The protein belongs to the KAE1 / TsaD family. It depends on Fe(2+) as a cofactor.

It localises to the cytoplasm. The catalysed reaction is L-threonylcarbamoyladenylate + adenosine(37) in tRNA = N(6)-L-threonylcarbamoyladenosine(37) in tRNA + AMP + H(+). Its function is as follows. Required for the formation of a threonylcarbamoyl group on adenosine at position 37 (t(6)A37) in tRNAs that read codons beginning with adenine. Is involved in the transfer of the threonylcarbamoyl moiety of threonylcarbamoyl-AMP (TC-AMP) to the N6 group of A37, together with TsaE and TsaB. TsaD likely plays a direct catalytic role in this reaction. The chain is tRNA N6-adenosine threonylcarbamoyltransferase from Chlorobaculum tepidum (strain ATCC 49652 / DSM 12025 / NBRC 103806 / TLS) (Chlorobium tepidum).